The primary structure comprises 485 residues: MSIRFESIEKLTELIKNKEIKPSDVVKDIYAAIEETDPTIKSFLALDKENAIKKAEELDELQAKDQMDGKLFGIPMGIKDNIITKDVETTCASKMLEGFVPIYESTVMNKLHDENAVLIGKLNMDEFAMGGSTETSYFKKTLNPFDHTAVPGGSSGGSAAAVAAGLVPFSLGSDTGGSIRQPASYCGVVGMKPTYGRVSRFGLVAFASSLDQIGPITRNVKDNALVLEAISGVDANDSTSAPVDDVDFTSDIGKDIKGLKIALPKEYLGEGVSEEVKTSVKEAVETLKSLGAEVDEVSLPNTKYGIPSYYVIASSEASVNLARFDGIRYGYHSKEAQSLEELYKMSRSEGFGEEVKRRIFLGTFALSSGYYDAYYKKSQKVRTLIKNDFDKVFESYDVVVGPTAPTTAFNIGEEIDDPLTMYANDLLTTPVNLAGLPGISVPCGQSNGRPIGLQLIGKPFDEKTLYRVAYQFETQYNLHDAYENL.

Residues K79 and S154 each act as charge relay system in the active site. Residue S178 is the Acyl-ester intermediate of the active site.

This sequence belongs to the amidase family. GatA subfamily. Heterotrimer of A, B and C subunits.

The enzyme catalyses L-glutamyl-tRNA(Gln) + L-glutamine + ATP + H2O = L-glutaminyl-tRNA(Gln) + L-glutamate + ADP + phosphate + H(+). Allows the formation of correctly charged Gln-tRNA(Gln) through the transamidation of misacylated Glu-tRNA(Gln) in organisms which lack glutaminyl-tRNA synthetase. The reaction takes place in the presence of glutamine and ATP through an activated gamma-phospho-Glu-tRNA(Gln). This Staphylococcus epidermidis (strain ATCC 35984 / DSM 28319 / BCRC 17069 / CCUG 31568 / BM 3577 / RP62A) protein is Glutamyl-tRNA(Gln) amidotransferase subunit A.